Reading from the N-terminus, the 172-residue chain is Ribosome maturation factor RimM (172 aa).

The 73-residue stretch at 96 to 168 folds into the PRC barrel domain; sequence EGEFYYHQII…RVDVELMEGL (73 aa).

This sequence belongs to the RimM family. In terms of assembly, binds ribosomal protein uS19.

It is found in the cytoplasm. Functionally, an accessory protein needed during the final step in the assembly of 30S ribosomal subunit, possibly for assembly of the head region. Essential for efficient processing of 16S rRNA. May be needed both before and after RbfA during the maturation of 16S rRNA. It has affinity for free ribosomal 30S subunits but not for 70S ribosomes. The polypeptide is Ribosome maturation factor RimM (Streptococcus pyogenes serotype M1).